The chain runs to 114 residues: Cytochrome c2 (114 aa).

Residue Q1 is modified to Pyrrolidone carboxylic acid. The heme c site is built by C13, C16, H17, and M93.

It belongs to the cytochrome c family. Post-translationally, binds 1 heme c group covalently per subunit.

The protein resides in the periplasm. Functionally, cytochrome c2 is found mainly in purple, non-sulfur, photosynthetic bacteria where it functions as the electron donor to the oxidized bacteriochlorophyll in the photophosphorylation pathway. However, it may also have a role in the respiratory chain and is found in some non-photosynthetic bacteria. The chain is Cytochrome c2 from Rhodopseudomonas palustris.